The following is a 545-amino-acid chain: DNA-binding protein REPIN1 (545 aa).

Residues Met-1–Lys-50 form a disordered region. Phosphoserine is present on Ser-27. Position 39 is an N6-acetyllysine (Lys-39). The C2H2-type 1; atypical zinc-finger motif lies at His-52 to Cys-74. 2 consecutive C2H2-type zinc fingers follow at residues Leu-80–His-102 and Phe-111–His-133. A C2H2-type 4; atypical zinc finger spans residues Ile-140 to Cys-162. 11 consecutive C2H2-type zinc fingers follow at residues Phe-172 to His-194, Phe-229 to His-251, His-257 to His-279, Tyr-285 to His-307, His-353 to His-375, Phe-381 to His-403, Phe-409 to His-431, Phe-437 to His-459, Tyr-465 to His-487, Tyr-493 to His-515, and Phe-521 to His-543. At Lys-269 the chain carries N6-acetyllysine.

Homodimers and homomultimers. Found in a complex with RIP60 and RIP100.

The protein localises to the nucleus. It localises to the cytoplasm. The protein resides in the cytosol. Its function is as follows. Sequence-specific double-stranded DNA-binding protein. Binds ATT-rich and T-rich DNA sequences and facilitates DNA bending. May regulate the expression of genes involved in cellular fatty acid import, including SCARB1/CD36, and genes involved in lipid droplet formation. May regulate the expression of LCN2, and thereby influence iron metabolism and apoptosis-related pathways. May regulate the expression of genes involved in glucose transport. The chain is DNA-binding protein REPIN1 (Repin1) from Mus musculus (Mouse).